Consider the following 427-residue polypeptide: Membrane-bound hydrogenase subunit alpha (427 aa).

Ni(2+) contacts are provided by C68, C71, C374, and C377.

It belongs to the complex I 49 kDa subunit family. The membrane-bound hydrogenase complex is composed of MbhK and MbhL, and may also contain MbhJ. Requires Ni(2+) as cofactor.

It is found in the cell membrane. The enzyme catalyses H2 + 2 oxidized [2Fe-2S]-[ferredoxin] = 2 reduced [2Fe-2S]-[ferredoxin] + 2 H(+). With respect to regulation, inhibited by 0.1 mM Cu(2+). Functionally, alpha subunit of a hydrogen-evolving hydrogenase that utilizes protons both as a substrate for hydrogen production and proton translocation. Acts by coupling the redox reaction via ferredoxin and iron-sulfur (Fe-S) clusters to proton translocation across the membrane thereby conserving the redox energy in a proton gradient. This Pyrococcus furiosus (strain ATCC 43587 / DSM 3638 / JCM 8422 / Vc1) protein is Membrane-bound hydrogenase subunit alpha.